A 335-amino-acid polypeptide reads, in one-letter code: MAVKVGINGFGRIGRNVFRAALNNPEVEVVAVNDLTDANMLAHLLQYDSVHGKLDAEVSVDGNNLVVNGKTIEVSAERDPAKLSWGKQGVEIVVESTGFFTKRADAAKHLEAGAKKVIISAPANEEDITIVMGVNEDKYDAANHDVISNASCTTNCLAPFAKVLNDKFGIKRGMMTTVHSYTNDQQILDLPHKDYRRARAAAENIIPTSTGAAKAVSLVLPELKGKLNGGAMRVPTPNVSLVDLVAELNQEVTAEEVNAALKEAAEGDLKGILGYSEEPLVSGDYNGNKNSSTIDALSTMVMEGSMVKVISWYDNESGYSNRVVDLAAYIAKKGL.

NAD(+)-binding positions include 12–13, aspartate 34, arginine 78, and serine 120; that span reads RI. Residues 151-153 and threonine 182 contribute to the D-glyceraldehyde 3-phosphate site; that span reads SCT. Residue cysteine 152 is the Nucleophile of the active site. Position 183 (asparagine 183) interacts with NAD(+). D-glyceraldehyde 3-phosphate-binding positions include arginine 197, 210 to 211, and arginine 233; that span reads TG. Asparagine 315 lines the NAD(+) pocket.

The protein belongs to the glyceraldehyde-3-phosphate dehydrogenase family. In terms of assembly, homotetramer. Interacts with BrxC. Post-translationally, in response to oxidative stress, the active site Cys likely reacts with bacillithiol (BSH) to form mixed disulfides to protect the Cys residue against overoxidation. S-bacillithiolation presumably leads to loss of catalytic activity. Debacillithiolation by monothiol bacilliredoxin BrxC restores the activity.

The protein localises to the cytoplasm. It catalyses the reaction D-glyceraldehyde 3-phosphate + phosphate + NAD(+) = (2R)-3-phospho-glyceroyl phosphate + NADH + H(+). Its pathway is carbohydrate degradation; glycolysis; pyruvate from D-glyceraldehyde 3-phosphate: step 1/5. Functionally, involved in the glycolysis. Catalyzes the oxidative phosphorylation of glyceraldehyde 3-phosphate (G3P) to 1,3-bisphosphoglycerate (BPG) using the cofactor NAD. The first reaction step involves the formation of a hemiacetal intermediate between G3P and a cysteine residue, and this hemiacetal intermediate is then oxidized to a thioester, with concomitant reduction of NAD to NADH. The reduced NADH is then exchanged with the second NAD, and the thioester is attacked by a nucleophilic inorganic phosphate to produce BPG. This is Glyceraldehyde-3-phosphate dehydrogenase 1 from Bacillus subtilis (strain 168).